We begin with the raw amino-acid sequence, 337 residues long: Draxin (337 aa).

Residues M1–A24 form the signal peptide. Disordered regions lie at residues G36–D67, R107–K133, and W234–P261. Composition is skewed to basic residues over residues V122–K133 and T237–K246. A glycan (N-linked (GlcNAc...) asparagine) is linked at N252.

Belongs to the draxin family. Interacts with LRP6.

It is found in the secreted. In terms of biological role, chemorepulsive axon guidance protein required for the development of spinal cord and forebrain commissures. Acts as a chemorepulsive guidance protein for commissural axons during development. Able to inhibit or repel neurite outgrowth from dorsal spinal cord. Inhibits the stabilization of cytosolic beta-catenin (CTNNB1) via its interaction with LRP6, thereby acting as an antagonist of Wnt signaling pathway. This is Draxin from Bos taurus (Bovine).